A 123-amino-acid chain; its full sequence is Holo-[acyl-carrier-protein] synthase (123 aa).

Residues Asp8 and Glu60 each coordinate Mg(2+).

It belongs to the P-Pant transferase superfamily. AcpS family. Requires Mg(2+) as cofactor.

The protein resides in the cytoplasm. It carries out the reaction apo-[ACP] + CoA = holo-[ACP] + adenosine 3',5'-bisphosphate + H(+). Functionally, transfers the 4'-phosphopantetheine moiety from coenzyme A to a Ser of acyl-carrier-protein. The polypeptide is Holo-[acyl-carrier-protein] synthase (Wolbachia pipientis wMel).